The sequence spans 290 residues: NAD kinase (290 aa).

Asp72 serves as the catalytic Proton acceptor. Residues 72-73 (DG), Lys77, 145-146 (NE), Asp175, 186-191 (TAYSLS), and Ala210 each bind NAD(+).

This sequence belongs to the NAD kinase family. It depends on a divalent metal cation as a cofactor.

The protein localises to the cytoplasm. It catalyses the reaction NAD(+) + ATP = ADP + NADP(+) + H(+). In terms of biological role, involved in the regulation of the intracellular balance of NAD and NADP, and is a key enzyme in the biosynthesis of NADP. Catalyzes specifically the phosphorylation on 2'-hydroxyl of the adenosine moiety of NAD to yield NADP. This Bacteroides fragilis (strain ATCC 25285 / DSM 2151 / CCUG 4856 / JCM 11019 / LMG 10263 / NCTC 9343 / Onslow / VPI 2553 / EN-2) protein is NAD kinase.